Reading from the N-terminus, the 368-residue chain is Germination protease (368 aa).

Residues 1–15 (MKEPLDLSKYSVRTD) constitute a propeptide that is removed on maturation.

The protein belongs to the peptidase A25 family. As to quaternary structure, homotetramer. Autoproteolytically processed. The inactive tetrameric zymogen termed p46 autoprocesses to a smaller form termed p41, which is active only during spore germination.

The catalysed reaction is Endopeptidase action with P4 Glu or Asp, P1 preferably Glu &gt; Asp, P1' hydrophobic and P2' Ala.. Initiates the rapid degradation of small, acid-soluble proteins during spore germination. The sequence is that of Germination protease from Bacillus anthracis (strain A0248).